The sequence spans 297 residues: Ribosomal RNA small subunit methyltransferase A (297 aa).

Residues asparagine 31, leucine 33, glycine 58, glutamate 79, aspartate 104, and asparagine 129 each coordinate S-adenosyl-L-methionine.

This sequence belongs to the class I-like SAM-binding methyltransferase superfamily. rRNA adenine N(6)-methyltransferase family. RsmA subfamily.

It is found in the cytoplasm. It catalyses the reaction adenosine(1518)/adenosine(1519) in 16S rRNA + 4 S-adenosyl-L-methionine = N(6)-dimethyladenosine(1518)/N(6)-dimethyladenosine(1519) in 16S rRNA + 4 S-adenosyl-L-homocysteine + 4 H(+). In terms of biological role, specifically dimethylates two adjacent adenosines (A1518 and A1519) in the loop of a conserved hairpin near the 3'-end of 16S rRNA in the 30S particle. May play a critical role in biogenesis of 30S subunits. The polypeptide is Ribosomal RNA small subunit methyltransferase A (Pediococcus pentosaceus (strain ATCC 25745 / CCUG 21536 / LMG 10740 / 183-1w)).